The sequence spans 87 residues: Small ribosomal subunit protein uS15 (87 aa).

It belongs to the universal ribosomal protein uS15 family. In terms of assembly, part of the 30S ribosomal subunit. Forms a bridge to the 50S subunit in the 70S ribosome, contacting the 23S rRNA.

Functionally, one of the primary rRNA binding proteins, it binds directly to 16S rRNA where it helps nucleate assembly of the platform of the 30S subunit by binding and bridging several RNA helices of the 16S rRNA. Forms an intersubunit bridge (bridge B4) with the 23S rRNA of the 50S subunit in the ribosome. The protein is Small ribosomal subunit protein uS15 of Clostridium kluyveri (strain NBRC 12016).